A 335-amino-acid polypeptide reads, in one-letter code: Ficolin-1 (335 aa).

The first 17 residues, 1-17 (MWWPMLWAFPVLLCLCS), serve as a signal peptide directing secretion. The disordered stretch occupies residues 47 to 114 (SCPSFPGPPG…TASPLGQKEL (68 aa)). The 39-residue stretch at 50-88 (SFPGPPGPKGEPGSPAGRGERGLQGSPGKMGPPGSKGEP) folds into the Collagen-like domain. The segment covering 75–88 (SPGKMGPPGSKGEP) has biased composition (low complexity). Positions 117 to 335 (ALCRRGPRSC…KVAEMKIRAS (219 aa)) constitute a Fibrinogen C-terminal domain. 2 disulfides stabilise this stretch: Cys119-Cys147 and Cys126-Cys154. Residues 123–162 (PRSCKDLLTRGIFLTGWYTIYLPDCRPLTVLCDMDVDGGG) form an a domain; contributes to trimerization region. Residues 163–251 (WTVFQRRVDG…LTLGQFLEGT (89 aa)) are b domain; contributes to trimerization. A Ca(2+)-binding site is contributed by Asp270. Residue Asn271 is glycosylated (N-linked (GlcNAc...) asparagine). Asp272 lines the Ca(2+) pocket. Cys279 and Cys292 are oxidised to a cystine. An a carbohydrate-binding site is contributed by 291–293 (DCH). The interval 326–335 (KVAEMKIRAS) is p domain.

This sequence belongs to the ficolin lectin family. In terms of assembly, homotrimer. Interacts with elastin/ELN. Interacts (via Fibrinogen C-terminal domain) with FFAR2. Interacts with CRP; may regulate monocyte activation by FCN1.

The protein localises to the secreted. Its subcellular location is the cell membrane. Its function is as follows. Extracellular lectin functioning as a pattern-recognition receptor in innate immunity. Binds the sugar moieties of pathogen-associated molecular patterns (PAMPs) displayed on microbes and activates the lectin pathway of the complement system. May also activate monocytes through a G protein-coupled receptor, FFAR2, inducing the secretion of interleukin-8/IL-8. Binds preferentially to 9-O-acetylated 2-6-linked sialic acid derivatives and to various glycans containing sialic acid engaged in a 2-3 linkage. This chain is Ficolin-1 (Fcn1), found in Rattus norvegicus (Rat).